The chain runs to 349 residues: Glucose 1-dehydrogenase 1 (349 aa).

C39 serves as a coordination point for Zn(2+). T41 serves as a coordination point for substrate. Zn(2+)-binding residues include H64 and E65. The substrate site is built by E110 and E146. E146 contributes to the Zn(2+) binding site. NADP(+) contacts are provided by residues 178–181 (AGPI), 260–262 (LGV), and 289–291 (SVN). N291 contributes to the substrate binding site.

The protein belongs to the zinc-containing alcohol dehydrogenase family. Glucose 1-dehydrogenase subfamily. It depends on Zn(2+) as a cofactor.

It catalyses the reaction D-glucose + NAD(+) = D-glucono-1,5-lactone + NADH + H(+). It carries out the reaction D-glucose + NADP(+) = D-glucono-1,5-lactone + NADPH + H(+). In terms of biological role, catalyzes the NAD(P)(+)-dependent oxidation of D-glucose to D-gluconate via gluconolactone. Can utilize both NAD(+) and NADP(+) as electron acceptor. Is involved in the degradation of glucose through a non-phosphorylative variant of the Entner-Doudoroff pathway. The protein is Glucose 1-dehydrogenase 1 of Caldivirga maquilingensis (strain ATCC 700844 / DSM 13496 / JCM 10307 / IC-167).